Here is a 978-residue protein sequence, read N- to C-terminus: Tyrosine-protein kinase transforming protein fms (978 aa).

The Extracellular portion of the chain corresponds to 1 to 543 (RMPSGPGHYG…IGAHTPLPDE (543 aa)). Ig-like C2-type domains follow at residues 55–134 (PVIQ…IHLY), 141–231 (PWKV…KVQK), 236–331 (PATL…RVVE), 333–431 (AYSN…LTLR), and 434–533 (PEVR…WPIS). Cys-76 and Cys-118 are disulfide-bonded. 11 N-linked (GlcNAc...) asparagine; by host glycosylation sites follow: Asn-79, Asn-107, Asn-128, Asn-187, Asn-309, Asn-320, Asn-336, Asn-369, Asn-444, Asn-511, and Asn-524. Intrachain disulfides connect Cys-161–Cys-211 and Cys-258–Cys-312. Cys-451 and Cys-516 form a disulfide bridge. The chain crosses the membrane as a helical span at residues 544–568 (LLFTPVLLTCMSIMALLLLLLLLLL). Topologically, residues 569-978 (YKYKQKPKYQ…PWQRTPPVAR (410 aa)) are cytoplasmic. In terms of domain architecture, Protein kinase spans 613 to 942 (LQFGKTLGTG…PTFQQICSLL (330 aa)). ATP-binding positions include 619–627 (LGTGAFGKV) and Lys-647. Asp-810 acts as the Proton acceptor in catalysis. Tyr-841 carries the post-translational modification Phosphotyrosine; by autocatalysis. The tract at residues 952–978 (VPNYTNLPSSSSSRLLRPWQRTPPVAR) is disordered. Over residues 958–969 (LPSSSSSRLLRP) the composition is skewed to low complexity. A Phosphothreonine modification is found at Thr-973.

It belongs to the protein kinase superfamily. Tyr protein kinase family. CSF-1/PDGF receptor subfamily.

The protein localises to the membrane. The catalysed reaction is L-tyrosyl-[protein] + ATP = O-phospho-L-tyrosyl-[protein] + ADP + H(+). Truncated version of the receptor for colony-stimulating factor 1 (CSF-1). The polypeptide is Tyrosine-protein kinase transforming protein fms (V-FMS) (Felidae (cat family)).